A 441-amino-acid polypeptide reads, in one-letter code: UDP-N-acetylglucosamine--peptide N-acetylglucosaminyltransferase stabilizing protein GtfB (441 aa).

This sequence belongs to the GtfB family. Forms a heterotetramer with 2 subunits each of GtfA and GtfB. Part of the accessory SecA2/SecY2 protein translocation apparatus.

Its subcellular location is the cell membrane. It participates in protein modification; protein glycosylation. Functionally, required for polymorphic O-glycosylation of the serine-rich repeat protein (SRRP) in this bacteria. A stabilizing protein that is part of the accessory SecA2/SecY2 system specifically required to export serine-rich repeat cell wall proteins encoded in the same operon. The GtfA-GtfB complex adds GlcNAc from UDP-GlcNAc to the substrate protein, attaching the first sugar residue. Stabilizes the glycosylation activity of GtfA. Has no N-acetylglucosaminyl transferase activity on its own. This chain is UDP-N-acetylglucosamine--peptide N-acetylglucosaminyltransferase stabilizing protein GtfB, found in Limosilactobacillus reuteri subsp. suis (strain ATCC 53608 / LMG 31752 / 1063) (Lactobacillus reuteri).